Here is a 359-residue protein sequence, read N- to C-terminus: Probable S-adenosylmethionine-dependent methyltransferase At5g38100 (359 aa).

6 residues coordinate S-adenosyl-L-homocysteine: Tyr-19, Cys-63, Asn-68, Asp-104, Ser-133, and Phe-134. 3 residues coordinate Mg(2+): Asn-172, Asp-258, and Phe-260.

The protein belongs to the methyltransferase superfamily. Type-7 methyltransferase family. Homodimer. It depends on Mg(2+) as a cofactor.

The chain is Probable S-adenosylmethionine-dependent methyltransferase At5g38100 from Arabidopsis thaliana (Mouse-ear cress).